Consider the following 199-residue polypeptide: Recombination protein RecR (199 aa).

The C4-type zinc finger occupies 58 to 73 (CKKCFNLTSEDECEIC). The 95-residue stretch at 81-175 (KLICVVSETK…KVTRIAYGLP (95 aa)) folds into the Toprim domain.

The protein belongs to the RecR family.

Its function is as follows. May play a role in DNA repair. It seems to be involved in an RecBC-independent recombinational process of DNA repair. It may act with RecF and RecO. The sequence is that of Recombination protein RecR from Prochlorococcus marinus (strain AS9601).